The following is a 598-amino-acid chain: Elongation factor 4 (598 aa).

The 183-residue stretch at 5–187 (SHIRNFSIIA…RLVATIPAPT (183 aa)) folds into the tr-type G domain. GTP is bound by residues 17 to 22 (DHGKST) and 134 to 137 (NKMD).

The protein belongs to the TRAFAC class translation factor GTPase superfamily. Classic translation factor GTPase family. LepA subfamily.

The protein resides in the cell inner membrane. The catalysed reaction is GTP + H2O = GDP + phosphate + H(+). Functionally, required for accurate and efficient protein synthesis under certain stress conditions. May act as a fidelity factor of the translation reaction, by catalyzing a one-codon backward translocation of tRNAs on improperly translocated ribosomes. Back-translocation proceeds from a post-translocation (POST) complex to a pre-translocation (PRE) complex, thus giving elongation factor G a second chance to translocate the tRNAs correctly. Binds to ribosomes in a GTP-dependent manner. This chain is Elongation factor 4, found in Pseudomonas syringae pv. syringae (strain B728a).